Consider the following 765-residue polypeptide: Eukaryotic translation initiation factor 3 subunit B (765 aa).

Positions 1–136 (MKNFLPRTLK…LFVECGSMND (136 aa)) are sufficient for interaction with HCR1 and TIF32. Residues 28–261 (RNTQLKRSKI…GVTAWGGPNF (234 aa)) form a sufficient for interaction with PIC8 region. A Phosphoserine modification is found at serine 61. Tyrosine 67 is subject to Phosphotyrosine. An RRM domain is found at 77 to 162 (QYIVVNGAPV…HRLFLYTMKD (86 aa)). A Phosphoserine modification is found at serine 671.

Belongs to the eIF-3 subunit B family. As to quaternary structure, component of the eukaryotic translation initiation factor 3 (eIF-3) complex.

The protein resides in the cytoplasm. Its function is as follows. RNA-binding component of the eukaryotic translation initiation factor 3 (eIF-3) complex, which is involved in protein synthesis of a specialized repertoire of mRNAs and, together with other initiation factors, stimulates binding of mRNA and methionyl-tRNAi to the 40S ribosome. The eIF-3 complex specifically targets and initiates translation of a subset of mRNAs involved in cell proliferation. The polypeptide is Eukaryotic translation initiation factor 3 subunit B (Saccharomyces cerevisiae (strain YJM789) (Baker's yeast)).